The following is a 332-amino-acid chain: Mitochondrial glycine transporter (332 aa).

Solcar repeat units lie at residues 11-94 (SSSY…LRQN), 121-205 (LSNL…LKKR), and 235-319 (TSAS…LIRR). Helical transmembrane passes span 17–42 (FGAG…TRVQ), 69–95 (GTVP…RQNV), 127–152 (LTTG…VRYE), 180–203 (GFGA…EELK), 239–265 (INFG…KTRI), and 294–312 (GLGL…AWTI).

Belongs to the mitochondrial carrier (TC 2.A.29) family. SLC25A38 subfamily.

The protein resides in the mitochondrion inner membrane. It carries out the reaction glycine(in) = glycine(out). In terms of biological role, mitochondrial glycine transporter that imports glycine into the mitochondrial matrix. Plays an important role in providing glycine for the first enzymatic step in heme biosynthesis, the condensation of glycine with succinyl-CoA to produce 5-aminolevulinate (ALA) in the mitochondrial matrix. In Botryotinia fuckeliana (strain B05.10) (Noble rot fungus), this protein is Mitochondrial glycine transporter.